The following is a 287-amino-acid chain: Nucleotide-binding protein MXAN_6564 (287 aa).

Position 13–20 (13–20 (GMSGSGKS)) interacts with ATP. 62–65 (DVRE) contacts GTP.

This sequence belongs to the RapZ-like family.

Its function is as follows. Displays ATPase and GTPase activities. This Myxococcus xanthus (strain DK1622) protein is Nucleotide-binding protein MXAN_6564.